The chain runs to 329 residues: RNA-binding protein CP33, chloroplastic (329 aa).

Residues 1–69 (MSSAYCSSAV…NIRRHRFFCA (69 aa)) constitute a chloroplast transit peptide. Positions 77–104 (ADDEIQASVEEEEEVEEEGDEGEEEVEE) are enriched in acidic residues. 2 disordered regions span residues 77 to 117 (ADDE…EEGR) and 296 to 329 (SERE…NVSA). RRM domains follow at residues 116–194 (GRLY…FPEV) and 219–297 (HKVY…LASE).

The protein resides in the plastid. It localises to the chloroplast. Its function is as follows. Could be involved in splicing and/or processing of chloroplast RNAs. The polypeptide is RNA-binding protein CP33, chloroplastic (Arabidopsis thaliana (Mouse-ear cress)).